The chain runs to 290 residues: Cytochrome bo(3) ubiquinol oxidase subunit 2 (290 aa).

Positions 1 to 24 are cleaved as a signal peptide; that stretch reads MISINFNNFFKTLLLILIAFTLHG. Residue C25 is the site of N-palmitoyl cysteine attachment. The S-diacylglycerol cysteine moiety is linked to residue C25. At 25–42 the chain is on the extracellular side; the sequence is CDSILFNPHGIIAIQECS. Residues 43 to 63 form a helical membrane-spanning segment; it reads ILLISFLIMLFVIIPVIFMTI. At 64–87 the chain is on the cytoplasmic side; that stretch reads YFSVKYRASNINAKYKPDWCDSKK. The chain crosses the membrane as a helical span at residues 88 to 108; that stretch reads IEIIVWTIPISIILFLAFVTW. Topologically, residues 109–290 are extracellular; that stretch reads NYSHILDPKK…TYSKNKVFKH (182 aa).

This sequence belongs to the cytochrome c oxidase subunit 2 family. As to quaternary structure, heterooctamer of two A chains, two B chains, two C chains and two D chains.

It is found in the cell membrane. Its function is as follows. Cytochrome bo(3) ubiquinol terminal oxidase is the component of the aerobic respiratory chain of E.coli that predominates when cells are grown at high aeration. Has proton pump activity across the membrane in addition to electron transfer, pumping 2 protons/electron. This is Cytochrome bo(3) ubiquinol oxidase subunit 2 (cyoA) from Buchnera aphidicola subsp. Schizaphis graminum (strain Sg).